A 390-amino-acid polypeptide reads, in one-letter code: Large ribosomal subunit protein uL3y (390 aa).

Positions 1–36 (MSHRKFEHPRHGSLGFLPRKRASRHRGKVKAFPKDD) are disordered. Residues 18-31 (PRKRASRHRGKVKA) show a composition bias toward basic residues.

Belongs to the universal ribosomal protein uL3 family.

Its subcellular location is the cytoplasm. This chain is Large ribosomal subunit protein uL3y (ARP2), found in Arabidopsis thaliana (Mouse-ear cress).